The following is a 525-amino-acid chain: Cytochrome P450 703A2 (525 aa).

A helical transmembrane segment spans residues proline 3–leucine 23. Cysteine 455 contributes to the heme binding site.

Belongs to the cytochrome P450 family. Heme is required as a cofactor.

It localises to the membrane. It catalyses the reaction dodecanoate + reduced [NADPH--hemoprotein reductase] + O2 = 7-hydroxydodecanoate + oxidized [NADPH--hemoprotein reductase] + H2O + H(+). Its function is as follows. Involved in pollen exine and anther epicuticular layer development. Catalyzes the in-chain hydroxylation of lauric acid (C12:0) preferentially on position 7, generating 7-hydroxylated lauric acid. Does not possess activity with other fatty acids (C14:0, C16:0, C16:1, and C18:0). Participates in a conserved pathway of in-chain hydroxylation of lauric acid required for anther cuticle and pollen exine formation. Directly regulated by TDR, a known regulator of tapetum programmed cell death (PCD) and pollen exine formation. This Oryza sativa subsp. japonica (Rice) protein is Cytochrome P450 703A2.